We begin with the raw amino-acid sequence, 662 residues long: uncharacterized protein (662 aa).

5 residues coordinate FAD: serine 145, glutamate 164, tryptophan 173, aspartate 184, and tyrosine 190. The segment at 638 to 662 is disordered; it reads SRLETSGVPREGVQRPGSRLRRRPS.

The protein belongs to the FAD-binding monooxygenase family. FAD serves as cofactor.

This is an uncharacterized protein from Sinorhizobium fredii (strain NBRC 101917 / NGR234).